Reading from the N-terminus, the 476-residue chain is E3 SUMO-protein ligase EGR2 (476 aa).

The segment covering 127–141 (PASTTASSSVTSASP) has biased composition (low complexity). The tract at residues 127-178 (PASTTASSSVTSASPNPLATGPLGVCTMSQTQPDLDHLYSPPPPPPPYSGCA) is disordered. The HCFC1-binding-motif (HBM) signature appears at 162-165 (DHLY). Position 247 is an N6-acetyllysine; by EP300 (lysine 247). Disordered regions lie at residues 275–300 (GPSA…SSSA) and 318–341 (RPIL…RPYP). The span at 281–290 (TGPGASGGSE) shows a compositional bias: gly residues. 3 consecutive C2H2-type zinc fingers follow at residues 340 to 364 (YPCP…IRIH), 370 to 392 (FQCR…IRTH), and 398 to 420 (FACD…TKIH). The disordered stretch occupies residues 412 to 476 (ERKRHTKIHL…APCSSRTRTP (65 aa)). Residues 415 to 425 (RHTKIHLRQKE) show a composition bias toward basic residues. A compositionally biased stretch (low complexity) spans 429–476 (SAPSASVPAPSTASCSGGVQPGGTLCSSNSSSLGGGPLAPCSSRTRTP).

The protein belongs to the EGR C2H2-type zinc-finger protein family. Interacts with HCFC1. Interacts with WWP2. Interacts with UBC9. Interacts with CITED1. Interacts (via phosphorylated form) with SFN. In terms of processing, ubiquitinated by WWP2 leading to proteasomal degradation. Post-translationally, acetylated at Lys-247. May be deacetylated by HDAC6, HDAC10 or SIRT1.

Its subcellular location is the nucleus. It functions in the pathway protein modification; protein sumoylation. Sequence-specific DNA-binding transcription factor. Plays a role in hindbrain segmentation by regulating the expression of a subset of homeobox containing genes and in Schwann cell myelination by regulating the expression of genes involved in the formation and maintenance of myelin. Binds to two EGR2-consensus sites EGR2A (5'-CTGTAGGAG-3') and EGR2B (5'-ATGTAGGTG-3') in the HOXB3 enhancer and promotes HOXB3 transcriptional activation. Binds to specific DNA sites located in the promoter region of HOXA4, HOXB2 and ERBB2. Regulates hindbrain segmentation by controlling the expression of Hox genes, such as HOXA4, HOXB3 and HOXB2, and thereby specifying odd and even rhombomeres. Promotes the expression of HOXB3 in the rhombomere r5 in the hindbrain. Regulates myelination in the peripheral nervous system after birth, possibly by regulating the expression of myelin proteins, such as MPZ, and by promoting the differentiation of Schwann cells. Involved in the development of the jaw openener musculature, probably by playing a role in its innervation through trigeminal motor neurons. May play a role in adipogenesis, possibly by regulating the expression of CEBPB. In terms of biological role, E3 SUMO-protein ligase helping SUMO1 conjugation to its coregulators NAB1 and NAB2, whose sumoylation down-regulates EGR2 transcriptional activity. The polypeptide is E3 SUMO-protein ligase EGR2 (EGR2) (Homo sapiens (Human)).